The following is a 200-amino-acid chain: Protein RISC-INTERACTING CLEARING 3'-5' EXORIBONUCLEASE 1 (200 aa).

Oligomerization regions lie at residues 35–66 (SKIL…KSEW), 102–127 (KFVT…IVIR), and 166–173 (DSIQSKWD).

This sequence belongs to the RICE family. In terms of assembly, homohexamer with DnaQ-like exonuclease fold in a ring-shaped structure with a central cavity. Component of AGO1 and AGO10-centered RNA-induced silencing complexes (RISC). Interacts with and acts as a cofactor of AGO1 and AGO10. Ubiquitously expressed throughout development in germinating seeds, cotyledons, leaves and roots of young seedlings and adult plants, stems and inflorescence.

It localises to the cytoplasm. The enzyme catalyses Exonucleolytic cleavage in the 3'- to 5'-direction to yield nucleoside 5'-phosphates.. Functionally, 3'-to-5' exoribonuclease (RNase) specifically targeting single-stranded RNAs. Triggers miRNA accumulation in RNA-induced silencing complex (RISC), composed of miRNAs and AGO proteins, by degrading uridylated cleavage fragments. Required during plant growth and development. The chain is Protein RISC-INTERACTING CLEARING 3'-5' EXORIBONUCLEASE 1 from Arabidopsis thaliana (Mouse-ear cress).